The following is a 1091-amino-acid chain: Protein JSN1 (1091 aa).

2 disordered regions span residues 31 to 51 (EYEN…KLGS) and 75 to 131 (HHSK…GSLT). The segment covering 99-111 (TVASKTPRASPSR) has biased composition (polar residues). Position 129 is a phosphoserine (Ser129). Residue Thr131 is modified to Phosphothreonine. Phosphoserine occurs at positions 160 and 168. The RRM domain maps to 340–426 (NTISISNVFP…APSKISFAKI (87 aa)). Composition is skewed to low complexity over residues 482 to 494 (QQSQ…NHSS) and 507 to 520 (NNNN…NNSA). Disordered regions lie at residues 482–534 (QQSQ…PPPN) and 568–591 (HKGT…EFDP). Residues 557–913 (QINSLIKKSL…RLLEEVGLAS (357 aa)) enclose the PUM-HD domain. A compositionally biased stretch (polar residues) spans 568–577 (HKGTSDTQNF). Pumilio repeat units follow at residues 617-652 (AMLD…IMLR), 653-689 (KTSK…QVTQ), 690-724 (GVKD…FIFE), 725-760 (SIIA…QSIV), and 801-837 (RLTK…IILD). A disordered region spans residues 911-981 (LASPSSTHNK…GSSASTLSPG (71 aa)). A Phosphoserine modification is found at Ser913. Low complexity-rich tracts occupy residues 915 to 935 (SSTH…SISH) and 951 to 979 (SVSS…STLS).

This chain is Protein JSN1 (JSN1), found in Saccharomyces cerevisiae (strain ATCC 204508 / S288c) (Baker's yeast).